Reading from the N-terminus, the 216-residue chain is Probable GTP-binding protein EngB (216 aa).

Residues 37 to 214 enclose the EngB-type G domain; it reads QGLEVAFAGR…RAAIIKLVAE (178 aa). GTP contacts are provided by residues 45 to 52, 72 to 76, 92 to 95, 159 to 162, and 193 to 195; these read GRSNVGKS, GRTQE, DMPG, TKAD, and TSS. The Mg(2+) site is built by Ser52 and Thr74.

Belongs to the TRAFAC class TrmE-Era-EngA-EngB-Septin-like GTPase superfamily. EngB GTPase family. Requires Mg(2+) as cofactor.

Its function is as follows. Necessary for normal cell division and for the maintenance of normal septation. The polypeptide is Probable GTP-binding protein EngB (Rhodopseudomonas palustris (strain BisA53)).